Reading from the N-terminus, the 976-residue chain is Vacuolar membrane protease (976 aa).

At 1–51 (MPLSTGLTLSSLNVMEKADNHYNMMTKQPPALSPVDMVSSRRGFNPIAFTP) the chain is on the cytoplasmic side. A helical transmembrane segment spans residues 52–72 (WPVTILSSLVYLAFIIPIIVV). Residues 73 to 399 (HHLVPPAPKE…DNGNDGKLNN (327 aa)) are Vacuolar-facing. N-linked (GlcNAc...) asparagine glycans are attached at residues Asn-147 and Asn-150. 2 residues coordinate Zn(2+): His-206 and Asp-218. The active-site Proton acceptor is the Glu-252. The Zn(2+) site is built by Glu-253, Glu-278, and His-351. A helical transmembrane segment spans residues 400–420 (GAGTLGVWFDFYGSSFAVFEL). The Cytoplasmic portion of the chain corresponds to 421–427 (NTLFGHS). Residues 428–448 (VALLVVAPLLLIATCVTLYTL) traverse the membrane as a helical segment. Residues 449 to 477 (DKMYMFSMYTYLSESGGQVSLYGLRGLFR) are Vacuolar-facing. A helical membrane pass occupies residues 478 to 498 (FPLILGISTALTIGLAFLLMK). Residues 499-519 (ANPFIIYSSPYAVWNPSALHR) lie on the Cytoplasmic side of the membrane. Residues 520-540 (AYAFTWMFGMMWVLLVIATVY) form a helical membrane-spanning segment. The Vacuolar portion of the chain corresponds to 541–550 (QKQHGIASSY). The chain crosses the membrane as a helical span at residues 551–571 (FIVFYFAGVSIATWISYLELF). Over 572–675 (GLPTTQDYAR…HRLEQRWSIN (104 aa)) the chain is Cytoplasmic. Residues 590–633 (TPSSDSRLLAPSADELPPSGSAAGHDFNPEDVEDEEPTESTSLL) form a disordered region. Positions 618–627 (PEDVEDEEPT) are enriched in acidic residues. Residues 676–696 (LISSAWILQFLFVAPIVIILL) traverse the membrane as a helical segment. Over 697-718 (GQLGLFLTSATYQIGADGGSQL) the chain is Vacuolar. A helical transmembrane segment spans residues 719–739 (VIYVGIAVLSVLILLPLFPFI). The Cytoplasmic segment spans residues 740-745 (HRFTYH). A helical membrane pass occupies residues 746–766 (IPTFLLFVLIGTLVYNLTAFP). Residues 767 to 976 (FSHSNRLKVA…LVEGSHSFKL (210 aa)) lie on the Vacuolar side of the membrane. N-linked (GlcNAc...) asparagine glycosylation is present at Asn-848.

This sequence belongs to the peptidase M28 family. Zn(2+) serves as cofactor.

It localises to the vacuole membrane. Its function is as follows. May be involved in vacuolar sorting and osmoregulation. This chain is Vacuolar membrane protease, found in Arthroderma otae (strain ATCC MYA-4605 / CBS 113480) (Microsporum canis).